Consider the following 628-residue polypeptide: Kelch-like protein diablo (628 aa).

Residues Met1–His56 form a disordered region. Residues Pro14–Asn29 show a composition bias toward low complexity. Positions Cys74–Glu141 constitute a BTB domain. The BACK domain occupies Cys176–Gly278. 6 Kelch repeats span residues Val325–Asp371, Leu373–Gly419, Phe420–Gly466, Leu468–Asn513, Ile515–Gly560, and Gln561–Ala607.

It functions in the pathway protein modification; protein ubiquitination. Probable substrate-specific adapter of an E3 ubiquitin-protein ligase complex which mediates the ubiquitination and subsequent proteasomal degradation of target proteins. May have a role in synapse differentiation and growth. This chain is Kelch-like protein diablo, found in Drosophila pseudoobscura pseudoobscura (Fruit fly).